A 351-amino-acid chain; its full sequence is Maleylacetate reductase (351 aa).

This sequence belongs to the iron-containing alcohol dehydrogenase family. As to quaternary structure, homodimer.

The enzyme catalyses 3-oxoadipate + NAD(+) = maleylacetate + NADH + H(+). It functions in the pathway aromatic compound metabolism. In terms of biological role, involved in the gamma-resorcylate (2,6-dihydroxybenzoate) catabolism. Catalyzes the reduction of maleylacetate to 3-oxoadipate. In Rhizobium sp. (strain MTP-10005), this protein is Maleylacetate reductase.